We begin with the raw amino-acid sequence, 261 residues long: MVLNSNYDNYKNKITNSMKPLINSVNPAFSNQENPNSVILTTFNDFTNWARLSSLWPLLYGTSCCFIEFASLIGSRFDFDRYGLVPRSSPRQADLIITAGTVTMKMAPSLVRLYEQMPEPKYVIAMGACTITGGMFSTDSYSTVRGVDKLIPVDIYLPGCPPKPEAIIDAIIKLRKKIAQETYKDKSKFQQGNRYLTLNHKFHFVSNINTGQYNKQLDTKISNSQFNSTLDTFIPIKKNENLTFLLKNEDNKENIENKSKD.

[4Fe-4S] cluster contacts are provided by C64, C65, C129, and C160.

It belongs to the complex I 20 kDa subunit family. In terms of assembly, NDH is composed of at least 16 different subunits, 5 of which are encoded in the nucleus. Requires [4Fe-4S] cluster as cofactor.

It is found in the plastid. Its subcellular location is the chloroplast thylakoid membrane. The catalysed reaction is a plastoquinone + NADH + (n+1) H(+)(in) = a plastoquinol + NAD(+) + n H(+)(out). It carries out the reaction a plastoquinone + NADPH + (n+1) H(+)(in) = a plastoquinol + NADP(+) + n H(+)(out). In terms of biological role, NDH shuttles electrons from NAD(P)H:plastoquinone, via FMN and iron-sulfur (Fe-S) centers, to quinones in the photosynthetic chain and possibly in a chloroplast respiratory chain. The immediate electron acceptor for the enzyme in this species is believed to be plastoquinone. Couples the redox reaction to proton translocation, and thus conserves the redox energy in a proton gradient. This chain is NAD(P)H-quinone oxidoreductase subunit K, chloroplastic, found in Physcomitrium patens (Spreading-leaved earth moss).